A 358-amino-acid chain; its full sequence is Programmed cell death protein 2-like (358 aa).

Ala2 is modified (N-acetylalanine). Ser20 is subject to Phosphoserine. Residue Thr22 is modified to Phosphothreonine.

In terms of tissue distribution, higher expression in lung, colon, mammary gland, cervix, stomach and small intestine.

Functionally, over-expression suppresses AP1, CREB, NFAT, and NF-kB transcriptional activation, and delays cell cycle progression at S phase. This Homo sapiens (Human) protein is Programmed cell death protein 2-like (PDCD2L).